Reading from the N-terminus, the 223-residue chain is Probable transaldolase (223 aa).

Lys-83 serves as the catalytic Schiff-base intermediate with substrate.

Belongs to the transaldolase family. Type 3B subfamily.

Its subcellular location is the cytoplasm. It carries out the reaction D-sedoheptulose 7-phosphate + D-glyceraldehyde 3-phosphate = D-erythrose 4-phosphate + beta-D-fructose 6-phosphate. The protein operates within carbohydrate degradation; pentose phosphate pathway; D-glyceraldehyde 3-phosphate and beta-D-fructose 6-phosphate from D-ribose 5-phosphate and D-xylulose 5-phosphate (non-oxidative stage): step 2/3. In terms of biological role, transaldolase is important for the balance of metabolites in the pentose-phosphate pathway. The chain is Probable transaldolase from Myxococcus xanthus (strain DK1622).